We begin with the raw amino-acid sequence, 200 residues long: Recombination protein RecR (200 aa).

The segment at 57–72 (CSQCRTFTEQETCAIC) adopts a C4-type zinc-finger fold. A Toprim domain is found at 81–176 (GLLCVVEMPA…KVSRIAHGIP (96 aa)).

This sequence belongs to the RecR family.

May play a role in DNA repair. It seems to be involved in an RecBC-independent recombinational process of DNA repair. It may act with RecF and RecO. This Actinobacillus succinogenes (strain ATCC 55618 / DSM 22257 / CCUG 43843 / 130Z) protein is Recombination protein RecR.